The chain runs to 438 residues: Battenin (438 aa).

Residues 1-25 (MGGCAGSRRRLSDSEGEETVPEPRL) form a disordered region. The Cytoplasmic segment spans residues 1-37 (MGGCAGSRRRLSDSEGEETVPEPRLPLLDHQGAHWKN). Ser12 and Ser14 each carry phosphoserine. The helical transmembrane segment at 38 to 58 (AVGFWLLGLCNNFSYVVMLSA) threads the bilayer. The Lumenal segment spans residues 59–127 (AHDILSHERT…GLHLLPYSPR (69 aa)). Asn71 and Asn85 each carry an N-linked (GlcNAc...) asparagine glycan. A helical membrane pass occupies residues 128–148 (VLVSGICAAGSFVLVAFSHSV). The Cytoplasmic segment spans residues 149 to 151 (GTS). A helical membrane pass occupies residues 152 to 172 (LCGVVLASISSGLGEVTFLSL). Topologically, residues 173–182 (TAFYPRAVIS) are lumenal. A helical membrane pass occupies residues 183–203 (WWSSGTGGAGLLGALSYLGLT). At 204-277 (QAGLSPQQTL…SLSLRERWTV (74 aa)) the chain is on the cytoplasmic side. The segment at 237 to 268 (QDPGGEEEAESSARQPLIRTEAPESKPGSSSS) is disordered. The Lysosomal targeting motif motif lies at 242–244 (EEE). Positions 253–254 (LI) match the Lysosomal targeting motif. Required for AP1G1, AP2A2 and AP3D1 interaction motif. A helical membrane pass occupies residues 278 to 298 (FKGLLWYIVPLVVVYFAEYFI). The Lumenal portion of the chain corresponds to 299 to 346 (NQGLFELLFFRNTSLSHAQQYRWYQMLYQAGVFASRSSLRCCHIRFTW). An N-linked (GlcNAc...) asparagine glycan is attached at Asn310. Residues 347 to 367 (ALALLQCLNLAFLLADVWFGF) traverse the membrane as a helical segment. Over 368-438 (LLSIYFVFLI…PLHDFLCQLS (71 aa)) the chain is Cytoplasmic. The short motif at 409 to 419 (MATTCISDTLG) is the Lysosomal targeting motif element. Cys435 bears the Cysteine methyl ester mark. The S-farnesyl cysteine moiety is linked to residue Cys435. Residues 436–438 (QLS) constitute a propeptide, removed in mature form.

It belongs to the battenin family. In terms of assembly, interacts with DCTN1, KIF3A, RAB7A and RILP. Interacts with CLN5. In terms of processing, highly glycosylated. Farnesylation is important for trafficking to lysosomes.

It localises to the lysosome membrane. The protein resides in the late endosome. The protein localises to the lysosome. Functionally, mediates microtubule-dependent, anterograde transport connecting the Golgi network, endosomes, autophagosomes, lysosomes and plasma membrane, and participates in several cellular processes such as regulation of lysosomal pH, lysosome protein degradation, receptor-mediated endocytosis, autophagy, transport of proteins and lipids from the TGN, apoptosis and synaptic transmission. Facilitates the proteins transport from trans-Golgi network (TGN)-to other membrane compartments such as transport of microdomain-associated proteins to the plasma membrane, IGF2R transport to the lysosome where it regulates the CTSD release leading to regulation of CTSD maturation and thereby APP intracellular processing. Moreover regulates CTSD activity in response to osmotic stress. Also binds galactosylceramide and transports it from the trans Golgi to the rafts, which may have immediate and downstream effects on cell survival by modulating ceramide synthesis. At the plasma membrane, regulates actin-dependent events including filopodia formation, cell migration, and pinocytosis through ARF1-CDC42 pathway and also the cytoskeleton organization through interaction with MYH10 and fodrin leading to the regulation of the plasma membrane association of Na+, K+ ATPase complex. Regulates synaptic transmission in the amygdala, hippocampus, and cerebellum through regulation of synaptic vesicles density and their proximity to active zones leading to modulation of short-term plasticity and age-dependent anxious behavior, learning and memory. Regulates autophagic vacuoles (AVs) maturation by modulating the trafficking between endocytic and autophagolysosomal/lysosomal compartments, which involves vesicle fusion leading to regulation of degradation process. Also participates in cellular homeostasis of compounds such as, water, ions, amino acids, proteins and lipids in several tissue namely in brain and kidney through regulation of their transport and synthesis. The polypeptide is Battenin (Macaca fascicularis (Crab-eating macaque)).